The chain runs to 327 residues: Beta-ketoacyl-[acyl-carrier-protein] synthase III (327 aa).

Active-site residues include Cys-112 and His-253. An ACP-binding region spans residues 254-258; sequence QANER. Residue Asn-283 is part of the active site.

Belongs to the thiolase-like superfamily. FabH family. Homodimer.

Its subcellular location is the cytoplasm. The enzyme catalyses malonyl-[ACP] + acetyl-CoA + H(+) = 3-oxobutanoyl-[ACP] + CO2 + CoA. The protein operates within lipid metabolism; fatty acid biosynthesis. Its function is as follows. Catalyzes the condensation reaction of fatty acid synthesis by the addition to an acyl acceptor of two carbons from malonyl-ACP. Catalyzes the first condensation reaction which initiates fatty acid synthesis and may therefore play a role in governing the total rate of fatty acid production. Possesses both acetoacetyl-ACP synthase and acetyl transacylase activities. Its substrate specificity determines the biosynthesis of branched-chain and/or straight-chain of fatty acids. This chain is Beta-ketoacyl-[acyl-carrier-protein] synthase III, found in Chlamydia muridarum (strain MoPn / Nigg).